The chain runs to 319 residues: HTH-type transcriptional regulator YidZ (319 aa).

One can recognise an HTH lysR-type domain in the interval 8–65 (LDLNLLLCLQLLMQERSVTKAAKRMNVTPSAVSKSLSKLRTWFDDPLFVNTPLGLTPT). Residues 25–44 (VTKAAKRMNVTPSAVSKSLS) constitute a DNA-binding region (H-T-H motif).

This sequence belongs to the LysR transcriptional regulatory family.

Its function is as follows. Involved in anaerobic NO protection. The protein is HTH-type transcriptional regulator YidZ of Citrobacter koseri (strain ATCC BAA-895 / CDC 4225-83 / SGSC4696).